Reading from the N-terminus, the 310-residue chain is Acetaldehyde dehydrogenase 1 (310 aa).

12-15 (SGNI) is an NAD(+) binding site. Cys127 acts as the Acyl-thioester intermediate in catalysis. Residues 163-171 (SAGPGTRAN) and Asn282 each bind NAD(+).

The protein belongs to the acetaldehyde dehydrogenase family.

It catalyses the reaction acetaldehyde + NAD(+) + CoA = acetyl-CoA + NADH + H(+). The protein is Acetaldehyde dehydrogenase 1 of Mycobacterium sp. (strain KMS).